A 502-amino-acid chain; its full sequence is Sodium/proline symporter (502 aa).

The Periplasmic portion of the chain corresponds to 1-5 (MAIST). A helical membrane pass occupies residues 6 to 26 (PMLVTFCVYIFGMILIGFIAW). Residues 27 to 41 (RSTKNFDDYILGGRS) lie on the Cytoplasmic side of the membrane. Hydrophilic regions lie at residues 27–66 (RSTKNFDDYILGGRSLGPFVTALSAGASDMSGWLLMGLPG) and 88–124 (INWKLVAGRLRVHTEYNNNALTLPDYFTGRFEDKSRI). A helical transmembrane segment spans residues 42–62 (LGPFVTALSAGASDMSGWLLM). Residues 63–67 (GLPGA) are Periplasmic-facing. A helical transmembrane segment spans residues 68–88 (VFLSGISESWIAIGLTLGAWI). Topologically, residues 89 to 126 (NWKLVAGRLRVHTEYNNNALTLPDYFTGRFEDKSRILR) are cytoplasmic. Residues 127 to 147 (IISALVILLFFTIYCASGIVA) traverse the membrane as a helical segment. Topologically, residues 148-162 (GARLFESTFGMSYET) are periplasmic. The segment at 151-162 (LFESTFGMSYET) is hydrophilic. A helical membrane pass occupies residues 163–183 (ALWAGAAATILYTFIGGFLAV). Residues 184–192 (SWTDTVQAS) are Cytoplasmic-facing. A hydrophilic region spans residues 185-189 (WTDTV). The helical transmembrane segment at 193 to 213 (LMIFALILTPVIVIISVGGFG) threads the bilayer. 3 hydrophilic regions span residues 214–231 (DSLEVIKQKSIENVDMLK), 249–274 (FGQPHILARFMAADSHHSIVHARRIS), and 296–319 (FNDHPALAGAVNQNAERVFIELAQ). Residues 214–234 (DSLEVIKQKSIENVDMLKGLN) are Periplasmic-facing. The chain crosses the membrane as a helical span at residues 235–255 (FVAIISLMGWGLGYFGQPHIL). The Cytoplasmic segment spans residues 256-275 (ARFMAADSHHSIVHARRISM). Residues 276–296 (TWMILCLAGAVAVGFFGIAYF) traverse the membrane as a helical segment. The Periplasmic portion of the chain corresponds to 297-319 (NDHPALAGAVNQNAERVFIELAQ). Residues 320-340 (ILFNPWIAGILLSAILAAVMS) traverse the membrane as a helical segment. Over 341–370 (TLSCQLLVCSSAITEDLYKAFLRKHASQKE) the chain is Cytoplasmic. Residues 341 to 370 (TLSCQLLVCSSAITEDLYKAFLRKHASQKE) form a hydrophilic region. The helical transmembrane segment at 371 to 391 (LVWVGRVMVLVVALVAIALAA) threads the bilayer. The Periplasmic portion of the chain corresponds to 392-397 (NPENRV). The hydrophilic stretch occupies residues 392–397 (NPENRV). A helical membrane pass occupies residues 398-418 (LGLVSYAWAGFGAAFGPVVLF). Residues 419-427 (SVMWSRMTR) lie on the Cytoplasmic side of the membrane. 2 hydrophilic regions span residues 424-430 (RMTRNGA) and 446-448 (QFG). The next 2 helical transmembrane spans lie at 428–448 (NGALAGMIIGALTVIVWKQFG) and 449–469 (WLGLYEIIPGFIFGSIGIVVF). The Cytoplasmic segment spans residues 470 to 502 (SLLGKAPSAAMQKRFAEADAHYHSAPPSRLQES). Residues 476–502 (PSAAMQKRFAEADAHYHSAPPSRLQES) form a hydrophilic region.

It belongs to the sodium:solute symporter (SSF) (TC 2.A.21) family. Has been isolated from inner membrane preparations as a homodimer.

Its subcellular location is the cell inner membrane. It catalyses the reaction L-proline(in) + Na(+)(in) = L-proline(out) + Na(+)(out). Its activity is regulated as follows. Activity is stimulated by phosphatidylethanolamine and phosphatidylglycerol, but not by phosphatidylcholine and cardiolipin. Proline uptake is inhibited by the sulfhydryl reagent N-ethylmaleimide (NEM). Proline, in the presence of Na(+) or Li(+), protects the carrier functions from NEM-inactivation. In terms of biological role, catalyzes the sodium-dependent uptake of extracellular L-proline. This protein is also capable of using lithium as the transport cation. Also catalyzes the uptake of propionate. This chain is Sodium/proline symporter (putP), found in Escherichia coli (strain K12).